Reading from the N-terminus, the 970-residue chain is Disease resistance protein RGA2 (970 aa).

Positions 135 to 438 (RQAVRRETGS…MAHGFLLSKG (304 aa)) constitute an NB-ARC domain. 182–189 (GMGGLGKT) is an ATP binding site. LRR repeat units follow at residues 525 to 548 (FISLRVLNLGDSTFNKLPSSIGDL), 550 to 571 (HLRYLNLYGSGMRSLPKQLCKL), 573 to 594 (NLQTLDLQYCTKLCCLPKETSK), 595 to 619 (LGSLRNLLLDGSQSLTCMPPRIGSL), 638 to 662 (LGELGNLNLYGSIKISHLERVKNDK), 672 to 697 (KGNLHSLSMSWNNFGPHIYESEEVKV), 752 to 777 (LPCLESLELHWGSADVEYVEEVDIDV), 787 to 811 (FPSLRKLDIWDFGSLKGLLKKEGEE), 813 to 832 (FPVLEEMIIHECPFLTLSSN), 833 to 857 (LRALTSLRICYNKVATSFPEEMFKN), 859 to 882 (ANLKYLTISRCNNLKELPTSLASL), 884 to 906 (ALKSLKIQLCCALESLPEEGLEG), 907 to 931 (LSSLTELFVEHCNMLKCLPEGLQHL), and 946 to 970 (IKRCEKGIGEDWHKISHIPNVNIYI).

Belongs to the disease resistance NB-LRR family.

Functionally, disease resistance protein. Resistance proteins guard the plant against pathogens that contain an appropriate avirulence protein via a direct or indirect interaction with this avirulence protein. That triggers a defense system which restricts the pathogen growth. Confers a broad resistance to all known races of P.infestans. This chain is Disease resistance protein RGA2 (RGA2), found in Solanum bulbocastanum (Wild potato).